We begin with the raw amino-acid sequence, 562 residues long: Membrane protein insertase YidC (562 aa).

Residues 4 to 24 traverse the membrane as a helical segment; it reads QRIFLFLALSILGLLLWTSWE. Residues 33-71 are disordered; the sequence is TEEVVEAEDDVPAPAETPDEAPDPADGETPARDRAEVED. The segment covering 35 to 58 has biased composition (acidic residues); the sequence is EVVEAEDDVPAPAETPDEAPDPAD. Residues 61 to 71 show a composition bias toward basic and acidic residues; that stretch reads TPARDRAEVED. 4 helical membrane-spanning segments follow: residues 330-350, 356-376, 426-446, and 499-519; these read MTLS…FWLL, IVGN…LAFY, LGGC…YWVL, and IMMA…AGLV.

Belongs to the OXA1/ALB3/YidC family. Type 1 subfamily. As to quaternary structure, interacts with the Sec translocase complex via SecD. Specifically interacts with transmembrane segments of nascent integral membrane proteins during membrane integration.

Its subcellular location is the cell inner membrane. Functionally, required for the insertion and/or proper folding and/or complex formation of integral membrane proteins into the membrane. Involved in integration of membrane proteins that insert both dependently and independently of the Sec translocase complex, as well as at least some lipoproteins. Aids folding of multispanning membrane proteins. This Alkalilimnicola ehrlichii (strain ATCC BAA-1101 / DSM 17681 / MLHE-1) protein is Membrane protein insertase YidC.